The sequence spans 572 residues: Phenylalanine--tRNA ligase beta subunit (572 aa).

The B5 domain occupies L278–P353. D331, D337, E340, and D341 together coordinate Mg(2+).

It belongs to the phenylalanyl-tRNA synthetase beta subunit family. Type 2 subfamily. As to quaternary structure, tetramer of two alpha and two beta subunits. Requires Mg(2+) as cofactor.

The protein resides in the cytoplasm. The catalysed reaction is tRNA(Phe) + L-phenylalanine + ATP = L-phenylalanyl-tRNA(Phe) + AMP + diphosphate + H(+). The sequence is that of Phenylalanine--tRNA ligase beta subunit from Thermococcus onnurineus (strain NA1).